We begin with the raw amino-acid sequence, 442 residues long: tRNA modification GTPase MnmE (442 aa).

The (6S)-5-formyl-5,6,7,8-tetrahydrofolate site is built by Arg-22, Glu-79, and Lys-119. In terms of domain architecture, TrmE-type G spans 216–366 (GIKTCLVGAP…LLEKIKSIFA (151 aa)). Asn-226 serves as a coordination point for K(+). Residues 226–231 (NSGKSS), 245–251 (SEIPGTT), and 270–273 (DTAG) each bind GTP. Mg(2+) is bound at residue Ser-230. Positions 245, 247, and 250 each coordinate K(+). Residue Thr-251 participates in Mg(2+) binding. (6S)-5-formyl-5,6,7,8-tetrahydrofolate is bound at residue Lys-442.

Belongs to the TRAFAC class TrmE-Era-EngA-EngB-Septin-like GTPase superfamily. TrmE GTPase family. As to quaternary structure, homodimer. Heterotetramer of two MnmE and two MnmG subunits. K(+) is required as a cofactor.

The protein localises to the cytoplasm. Exhibits a very high intrinsic GTPase hydrolysis rate. Involved in the addition of a carboxymethylaminomethyl (cmnm) group at the wobble position (U34) of certain tRNAs, forming tRNA-cmnm(5)s(2)U34. This Mesomycoplasma hyopneumoniae (strain J / ATCC 25934 / NCTC 10110) (Mycoplasma hyopneumoniae) protein is tRNA modification GTPase MnmE.